The chain runs to 909 residues: Alanine--tRNA ligase (909 aa).

His-600, His-604, Cys-704, and His-708 together coordinate Zn(2+).

Belongs to the class-II aminoacyl-tRNA synthetase family. Zn(2+) serves as cofactor.

The protein resides in the cytoplasm. It catalyses the reaction tRNA(Ala) + L-alanine + ATP = L-alanyl-tRNA(Ala) + AMP + diphosphate. Functionally, catalyzes the attachment of alanine to tRNA(Ala) in a two-step reaction: alanine is first activated by ATP to form Ala-AMP and then transferred to the acceptor end of tRNA(Ala). Also edits incorrectly charged Ser-tRNA(Ala) and Gly-tRNA(Ala) via its editing domain. In Staphylothermus marinus (strain ATCC 43588 / DSM 3639 / JCM 9404 / F1), this protein is Alanine--tRNA ligase.